The following is a 213-amino-acid chain: Holliday junction resolvase RecU (213 aa).

Mg(2+) is bound by residues Thr-99, Asp-101, Glu-114, and Gln-133.

This sequence belongs to the RecU family. Requires Mg(2+) as cofactor.

Its subcellular location is the cytoplasm. It carries out the reaction Endonucleolytic cleavage at a junction such as a reciprocal single-stranded crossover between two homologous DNA duplexes (Holliday junction).. Its function is as follows. Endonuclease that resolves Holliday junction intermediates in genetic recombination. Cleaves mobile four-strand junctions by introducing symmetrical nicks in paired strands. Promotes annealing of linear ssDNA with homologous dsDNA. Required for DNA repair, homologous recombination and chromosome segregation. The sequence is that of Holliday junction resolvase RecU from Lactococcus lactis subsp. cremoris (strain MG1363).